A 303-amino-acid polypeptide reads, in one-letter code: Putative fimbrium subunit Fim1C (303 aa).

Residues methionine 1–aspartate 22 form the signal peptide.

This sequence belongs to the bacteroidetes fimbrillin superfamily. Mfa-like family. In terms of assembly, may be part of the fimbrial tip.

The protein resides in the fimbrium. Its function is as follows. Putative component of the fimbrium tip. Fimbriae are filamentous appendages on the cell surface that mediate cell adhesion and biofilm formation. This is Putative fimbrium subunit Fim1C (fim1C) from Bacteroides uniformis (strain ATCC 8492 / DSM 6597 / CCUG 4942 / CIP 103695 / JCM 5828 / KCTC 5204 / NCTC 13054 / VPI 0061).